We begin with the raw amino-acid sequence, 449 residues long: Naphthalene 1,2-dioxygenase system, large oxygenase component (449 aa).

Positions 39 to 137 (WLFLTHDSLI…LNKKCLGLKE (99 aa)) constitute a Rieske domain. C81, H83, C101, and H104 together coordinate [2Fe-2S] cluster. Fe cation-binding residues include H208, H213, and D362.

This sequence belongs to the bacterial ring-hydroxylating dioxygenase alpha subunit family. In terms of assembly, the naphthalene dioxygenase (NDO) multicomponent enzyme system is composed of an electron transfer component and a dioxygenase component (iron sulfur protein (ISP)). The electron transfer component is composed of a ferredoxin reductase (NdoR) and a ferredoxin (NdoA), and the dioxygenase component is formed of a heterohexamer (trimer of heterodimers) of three large alpha subunits (NdoB) and three small beta subunits (NdoC). It depends on [2Fe-2S] cluster as a cofactor. The cofactor is Fe(2+).

It catalyses the reaction naphthalene + NADH + O2 + H(+) = (1R,2S)-1,2-dihydronaphthalene-1,2-diol + NAD(+). The protein operates within aromatic compound metabolism; naphthalene degradation. Functionally, component of the naphthalene dioxygenase (NDO) multicomponent enzyme system which catalyzes the incorporation of both atoms of molecular oxygen into naphthalene to form cis-(1R,2S)-dihydroxy-1,2-dihydronaphthalene. The alpha subunit has a catalytic role in the holoenzyme. In Pseudomonas fluorescens, this protein is Naphthalene 1,2-dioxygenase system, large oxygenase component.